The following is a 278-amino-acid chain: MTVLHSVDFFPSCNASVAIEPRLPQADFPEHHHDFHEIVIVEHGTGIHVFNGQPYTITGGTVCFVRDHDRHLYEHTDNLCLTNVLYRSPDRFQFLAGLNQLLPQELDGQYPSHWRVNHSVLQQVRQLVAQMEQQEGENDLPSTASREILFMQLLLLLRKSSLQENLENSASRLNLLLAWLEDHFADEVNWDAVADQFSLSLRTLHRQLKQQTGLTPQRYLNRLRLMKARHLLRHSEASVTDIAYRCGFSDSNHFSTLFRREFNWSPRDIRQGRDGFLQ.

In terms of domain architecture, HTH araC/xylS-type spans 174–272 (NLLLAWLEDH…NWSPRDIRQG (99 aa)). DNA-binding regions (H-T-H motif) lie at residues 191-212 (DAVA…KQQT) and 239-262 (VTDI…RREF).

As to quaternary structure, binds DNA as a dimer.

The protein localises to the cytoplasm. Activates expression of the rhaBAD and rhaT operons. This chain is HTH-type transcriptional activator RhaS, found in Shigella flexneri serotype 5b (strain 8401).